A 124-amino-acid polypeptide reads, in one-letter code: Histone H2A (124 aa).

The segment covering 1-18 (MSGRGKSGKARTKAKSRS) has biased composition (basic residues). A disordered region spans residues 1–21 (MSGRGKSGKARTKAKSRSSRA). Serine 2 bears the N-acetylserine mark. The residue at position 2 (serine 2) is a Phosphoserine. Glutamine 104 is modified (N5-methylglutamine). Lysine 119 is covalently cross-linked (Glycyl lysine isopeptide (Lys-Gly) (interchain with G-Cter in ubiquitin)).

This sequence belongs to the histone H2A family. In terms of assembly, the nucleosome is a histone octamer containing two molecules each of H2A, H2B, H3 and H4 assembled in one H3-H4 heterotetramer and two H2A-H2B heterodimers. The octamer wraps approximately 147 bp of DNA. Monoubiquitination of Lys-119 gives a specific tag for epigenetic transcriptional repression. Post-translationally, phosphorylation of Ser-2 directly represses transcription.

Its subcellular location is the nucleus. It is found in the chromosome. Its function is as follows. Core component of nucleosome. Nucleosomes wrap and compact DNA into chromatin, limiting DNA accessibility to the cellular machineries which require DNA as a template. Histones thereby play a central role in transcription regulation, DNA repair, DNA replication and chromosomal stability. DNA accessibility is regulated via a complex set of post-translational modifications of histones, also called histone code, and nucleosome remodeling. The chain is Histone H2A from Paracentrotus lividus (Common sea urchin).